Consider the following 466-residue polypeptide: Pyruvate kinase (466 aa).

Arg-32 serves as a coordination point for substrate. Positions 34, 36, and 66 each coordinate K(+). 34 to 37 is a binding site for ATP; sequence NTSH. Arg-73 serves as a coordination point for ATP. Glu-219 contacts Mg(2+). Substrate-binding residues include Gly-242, Asp-243, and Thr-275. A Mg(2+)-binding site is contributed by Asp-243.

It belongs to the pyruvate kinase family. Homotetramer. A divalent metal cation serves as cofactor.

It catalyses the reaction pyruvate + ATP = phosphoenolpyruvate + ADP + H(+). It participates in carbohydrate degradation; glycolysis; pyruvate from D-glyceraldehyde 3-phosphate: step 5/5. With respect to regulation, allosterically activated by AMP and inhibited by ATP. This is Pyruvate kinase (pyk) from Thermotoga maritima (strain ATCC 43589 / DSM 3109 / JCM 10099 / NBRC 100826 / MSB8).